Consider the following 108-residue polypeptide: ATP synthase peripheral stalk subunit F6, mitochondrial (108 aa).

Residues 1–32 (MVLQRIFRLSSVLRSAVSVHLKRNIGVTAVAF) constitute a mitochondrion transit peptide. Lysine 41, lysine 46, and lysine 79 each carry N6-acetyllysine. An N6-acetyllysine; alternate mark is found at lysine 84, lysine 94, and lysine 99. Residues lysine 84, lysine 94, and lysine 99 each carry the N6-succinyllysine; alternate modification. N6-acetyllysine is present on lysine 105. Serine 108 bears the Phosphoserine mark.

Belongs to the eukaryotic ATPase subunit F6 family. As to quaternary structure, component of the ATP synthase complex composed at least of ATP5F1A/subunit alpha, ATP5F1B/subunit beta, ATP5MC1/subunit c (homooctomer), MT-ATP6/subunit a, MT-ATP8/subunit 8, ATP5ME/subunit e, ATP5MF/subunit f, ATP5MG/subunit g, ATP5MK/subunit k, ATP5MJ/subunit j, ATP5F1C/subunit gamma, ATP5F1D/subunit delta, ATP5F1E/subunit epsilon, ATP5PF/subunit F6, ATP5PB/subunit b, ATP5PD/subunit d, ATP5PO/subunit OSCP. ATP synthase complex consists of a soluble F(1) head domain (subunits alpha(3) and beta(3)) - the catalytic core - and a membrane F(0) domain - the membrane proton channel (subunits c, a, 8, e, f, g, k and j). These two domains are linked by a central stalk (subunits gamma, delta, and epsilon) rotating inside the F1 region and a stationary peripheral stalk (subunits F6, b, d, and OSCP).

It is found in the mitochondrion. The protein localises to the mitochondrion inner membrane. Subunit F6, of the mitochondrial membrane ATP synthase complex (F(1)F(0) ATP synthase or Complex V) that produces ATP from ADP in the presence of a proton gradient across the membrane which is generated by electron transport complexes of the respiratory chain. ATP synthase complex consist of a soluble F(1) head domain - the catalytic core - and a membrane F(1) domain - the membrane proton channel. These two domains are linked by a central stalk rotating inside the F(1) region and a stationary peripheral stalk. During catalysis, ATP synthesis in the catalytic domain of F(1) is coupled via a rotary mechanism of the central stalk subunits to proton translocation. In vivo, can only synthesize ATP although its ATP hydrolase activity can be activated artificially in vitro. Part of the complex F(0) domain. Part of the complex F(0) domain and the peripheric stalk, which acts as a stator to hold the catalytic alpha(3)beta(3) subcomplex and subunit a/ATP6 static relative to the rotary elements. The polypeptide is ATP synthase peripheral stalk subunit F6, mitochondrial (Mus musculus (Mouse)).